A 337-amino-acid chain; its full sequence is DNA-directed RNA polymerase subunit alpha (337 aa).

The alpha N-terminal domain (alpha-NTD) stretch occupies residues 1-223; the sequence is MLISQRPALT…ELFGLAQELN (223 aa). An alpha C-terminal domain (alpha-CTD) region spans residues 238-337; sequence SEHIAAYSMP…IDTEGEDIAE (100 aa).

It belongs to the RNA polymerase alpha chain family. Homodimer. The RNAP catalytic core consists of 2 alpha, 1 beta, 1 beta' and 1 omega subunit. When a sigma factor is associated with the core the holoenzyme is formed, which can initiate transcription.

It carries out the reaction RNA(n) + a ribonucleoside 5'-triphosphate = RNA(n+1) + diphosphate. DNA-dependent RNA polymerase catalyzes the transcription of DNA into RNA using the four ribonucleoside triphosphates as substrates. The chain is DNA-directed RNA polymerase subunit alpha from Corynebacterium jeikeium (strain K411).